Here is a 182-residue protein sequence, read N- to C-terminus: ADP-ribosylation factor 1 (182 aa).

Gly-2 carries N-myristoyl glycine lipidation. Residues 24–31, 67–71, and 126–129 each bind GTP; these read GLDNAGKT, DLGGQ, and NKQD.

The protein belongs to the small GTPase superfamily. Arf family.

It localises to the golgi apparatus. The catalysed reaction is GTP + H2O = GDP + phosphate + H(+). In terms of biological role, GTP-binding protein involved in protein trafficking; may modulate vesicle budding and uncoating within the Golgi apparatus. The chain is ADP-ribosylation factor 1 (ARF1) from Brassica rapa subsp. pekinensis (Chinese cabbage).